The primary structure comprises 530 residues: MATPDVSVHMEEVVVVTTPDTAVDGSGVEGVKTVLVTTNLAPHGGDLTEDNMETENAAAAAAAAFTASSQLKEAVLVKMAEEGENLEAEIVYPITCGDSRANLIWRKFVCPGINVKCVQYDEHVISPKEFVHLAGKSTLKDWKRAIRMNGIMLRKIMDSGELDFYQHDKVCSNTCRSTKIDLSGARVSLSSPTSAEYIPLTPAAADVNGSPATITIETCEDPGDWTAAIGDDTFTFWRGLKDAGLLDEVIQEFHQELVETMRGLQQRVQDPPLQLRDAVLLNNIVQNFGMLDLVKKVLASHKCQMDRSREQYARDLAALEQQCDEHRRRAKELKHKSQHLSNVLMTLTPVSLPPPVKRPRLARATSGPAAMASQVLTQSAQLALGPGVPVPQLTSVPLGKVVSTLPSTVLGKGSLQAPPASSPASPLLGGYTVLASSGSTYPSTVEIHPDASSLTVLSTAAVQDGSTVFKVVSPLQLLTLPGLGPTLQNVAQASPGSSTIVTVPAGAAPGPEEHTATIEVAAMAEDHERK.

The region spanning 81-163 (EEGENLEAEI…RKIMDSGELD (83 aa)) is the SAND domain. Cysteine 110 contacts Zn(2+). 4 residues coordinate DNA: lysine 136, lysine 140, lysine 143, and arginine 154. A Glycyl lysine isopeptide (Lys-Gly) (interchain with G-Cter in SUMO1); alternate cross-link involves residue lysine 155. A Glycyl lysine isopeptide (Lys-Gly) (interchain with G-Cter in SUMO2); alternate cross-link involves residue lysine 155. Zn(2+) contacts are provided by histidine 167, cysteine 171, and cysteine 175. Positions 304 to 348 (QMDRSREQYARDLAALEQQCDEHRRRAKELKHKSQHLSNVLMTLT) form a coiled coil. Position 373 is a phosphoserine (serine 373).

In terms of assembly, homodimer, and heterodimer of GMEB1 and GMEB2. GMEB1 and GMEB2 form the parvovirus initiator complex (PIF). Interacts with the glucocorticoid receptor (NR3C1). May interact with CREB-binding protein (CBP). Expressed in peripheral blood lymphocytes and fetal liver. Expressed preferentially in reproductive and/or developmentally important cells, such as testis, placenta, bone marrow and fetal tissues.

It is found in the nucleus. The protein localises to the cytoplasm. Its function is as follows. Trans-acting factor that binds to glucocorticoid modulatory elements (GME) present in the TAT (tyrosine aminotransferase) promoter and increases sensitivity to low concentrations of glucocorticoids. Also binds to the transferrin receptor promoter. Essential auxiliary factor for the replication of parvoviruses. This is Glucocorticoid modulatory element-binding protein 2 (GMEB2) from Homo sapiens (Human).